The primary structure comprises 422 residues: Serine--tRNA ligase (422 aa).

229–231 (TAE) lines the L-serine pocket. 260-262 (RKE) provides a ligand contact to ATP. Position 283 (Glu-283) interacts with L-serine. An ATP-binding site is contributed by 347 to 350 (EISS). Residue Ser-383 participates in L-serine binding.

It belongs to the class-II aminoacyl-tRNA synthetase family. Type-1 seryl-tRNA synthetase subfamily. Homodimer. The tRNA molecule binds across the dimer.

The protein localises to the cytoplasm. It carries out the reaction tRNA(Ser) + L-serine + ATP = L-seryl-tRNA(Ser) + AMP + diphosphate + H(+). The catalysed reaction is tRNA(Sec) + L-serine + ATP = L-seryl-tRNA(Sec) + AMP + diphosphate + H(+). It participates in aminoacyl-tRNA biosynthesis; selenocysteinyl-tRNA(Sec) biosynthesis; L-seryl-tRNA(Sec) from L-serine and tRNA(Sec): step 1/1. Its function is as follows. Catalyzes the attachment of serine to tRNA(Ser). Is also able to aminoacylate tRNA(Sec) with serine, to form the misacylated tRNA L-seryl-tRNA(Sec), which will be further converted into selenocysteinyl-tRNA(Sec). This is Serine--tRNA ligase from Citrifermentans bemidjiense (strain ATCC BAA-1014 / DSM 16622 / JCM 12645 / Bem) (Geobacter bemidjiensis).